An 891-amino-acid polypeptide reads, in one-letter code: MSGVNEIRSAFLNYFGKNGHEIVASSPLVPRNDPTLMFTNAGMVQFKNVFTGVEKRANPRAVSSQKCVRAGGKHNDLDNVGYTARHHTFFEMLGNFSFGDYFKDHAIELAWNLITKEYGLAKDRLLVTVFSEDDEAFGLWKKIAGLPDSKIIRIPTSDNFWQMGDTGPCGPCSEIFFDHGDHIFGGPPGSPEEDGDRFIEIWNLVFMQFDQVAPGSRNPLPKPSIDTGMGLERIAAVLQGKHDNYEIDLFQALIRAIADLTGADPQGEQKASLRVIADHLRASSFLIADGVLPSNEGRGYVLRRIMRRAMRHGQLLGAREPLMWRLVWALVREMGQAYPELVRAENLIEETLRLEETRFRKTLERGLGILDEKSNTLKQGDMFDGETAFTLYDTYGFPLDLTQDALRARGISVDIASFTDAMDRQRALARASWTGSGDTAAETVWFGLREKLGATEFLGYETETAEAEVAALVKDGQVVDQLKTGDSGAIVLNQTPFYAESGGQVGDTGVLSADGVRFRVTETQKKAGDLFVHLGTVEEGTIKLATALALNVDHDRRGAIRANHSATHLLHEALRQVLGDHIAQKGSLVAPDRLRFDFMHPKPISAEELRRVEDIANEVVLENDEVTTRLMAVDDARDAGARALFGEKYGDEVRVVVMGKGSRDRGANALGWSVELCGGTHVKRTGDIGLISVTGESAVASGVRRIEALTGRQARQSANAAIATAKQAAAELRTSVDDMPARIAALMDERKKLERELAEARKKLAMGGGGAAGAANGASDVREVGGVKLMARAVEGVEIKDLKSLVDQGKKQLGSGVIALIATSEDGKGSIVVGVTPDLVARFSAVDLVRKASEVLGGKGGGGKPDMAQAGGPDGAKAQQALDAIAAAIAG.

Zn(2+) is bound by residues histidine 564, histidine 568, cysteine 677, and histidine 681.

The protein belongs to the class-II aminoacyl-tRNA synthetase family. Zn(2+) is required as a cofactor.

It localises to the cytoplasm. It catalyses the reaction tRNA(Ala) + L-alanine + ATP = L-alanyl-tRNA(Ala) + AMP + diphosphate. Functionally, catalyzes the attachment of alanine to tRNA(Ala) in a two-step reaction: alanine is first activated by ATP to form Ala-AMP and then transferred to the acceptor end of tRNA(Ala). Also edits incorrectly charged Ser-tRNA(Ala) and Gly-tRNA(Ala) via its editing domain. The polypeptide is Alanine--tRNA ligase (Rhodopseudomonas palustris (strain BisA53)).